Here is a 603-residue protein sequence, read N- to C-terminus: Alpha-1,2-mannosyltransferase algn-9 (603 aa).

The tract at residues 1–25 is disordered; that stretch reads MVTHRRKGGSGPPQKPPPRIVDRSS. At 1-108 the chain is on the lumenal side; it reads MVTHRRKGGS…EYSPVYAIRS (108 aa). The helical transmembrane segment at 109 to 129 threads the bilayer; the sequence is YFYIYLHYIPASLFANLFGDT. Lys-130 is a topological domain (cytoplasmic). Residues 131–151 form a helical membrane-spanning segment; sequence IVVFTLIRLTIGLFCLLGEYY. Topologically, residues 152–166 are lumenal; sequence AFDAICKKINIATGR. A helical transmembrane segment spans residues 167–187; sequence FFILFSIFSSGMFLASTAFVP. Residues 188-195 are Cytoplasmic-facing; that stretch reads SSFCMAIT. The helical transmembrane segment at 196-216 threads the bilayer; it reads FYILGAYLNENWTAGIFCVAF. Residues 217 to 218 are Lumenal-facing; sequence ST. The chain crosses the membrane as a helical span at residues 219 to 239; it reads MVGWPFSAVLGLPIVADMLLL. The Cytoplasmic portion of the chain corresponds to 240-245; it reads KGLRIR. The helical transmembrane segment at 246-266 threads the bilayer; that stretch reads FILTSLVIGLCIGGVQVITDS. At 267–310 the chain is on the lumenal side; the sequence is HYFGKTVLAPLNIFLYNVVSGPGPSLYGEEPLSFYIKNLFNNWN. Residues 311–331 traverse the membrane as a helical segment; the sequence is IVIFAAPFGFPLSLAYFTKVW. Topologically, residues 332-343 are cytoplasmic; sequence MSQDRNVALYQR. Residues 344–364 traverse the membrane as a helical segment; it reads FAPIILLAVTTAAWLLIFGSQ. The Lumenal portion of the chain corresponds to 365–370; sequence AHKEER. The helical transmembrane segment at 371 to 391 threads the bilayer; the sequence is FLFPIYPFIAFFAALALDATN. Over 392–397 the chain is Cytoplasmic; that stretch reads RLCLKK. The chain crosses the membrane as a helical span at residues 398–418; that stretch reads LGMDNILSILFILCFAILSAS. Residues 419 to 603 lie on the Lumenal side of the membrane; the sequence is RTYSIHNNYG…TCTLYRKSNL (185 aa). Residue Asn-443 is glycosylated (N-linked (GlcNAc...) asparagine).

The protein belongs to the glycosyltransferase 22 family.

Its subcellular location is the endoplasmic reticulum membrane. It carries out the reaction an alpha-D-Man-(1-&gt;2)-alpha-D-Man-(1-&gt;2)-alpha-D-Man-(1-&gt;3)-[alpha-D-Man-(1-&gt;3)-alpha-D-Man-(1-&gt;6)]-beta-D-Man-(1-&gt;4)-beta-D-GlcNAc-(1-&gt;4)-alpha-D-GlcNAc-diphospho-di-trans,poly-cis-dolichol + a di-trans,poly-cis-dolichyl beta-D-mannosyl phosphate = an alpha-D-Man-(1-&gt;2)-alpha-D-Man-(1-&gt;2)-alpha-D-Man-(1-&gt;3)-[alpha-D-Man-(1-&gt;2)-alpha-D-Man-(1-&gt;3)-alpha-D-Man-(1-&gt;6)]-beta-D-Man-(1-&gt;4)-beta-D-GlcNAc-(1-&gt;4)-alpha-D-GlcNAc-diphospho-di-trans,poly-cis-dolichol + a di-trans,poly-cis-dolichyl phosphate + H(+). The catalysed reaction is an alpha-D-Man-(1-&gt;2)-alpha-D-Man-(1-&gt;2)-alpha-D-Man-(1-&gt;3)-[alpha-D-Man-(1-&gt;2)-alpha-D-Man-(1-&gt;3)-[alpha-D-Man-(1-&gt;6)]-alpha-D-Man-(1-&gt;6)]-beta-D-Man-(1-&gt;4)-beta-D-GlcNAc-(1-&gt;4)-alpha-D-GlcNAc-diphospho-di-trans,poly-cis-dolichol + a di-trans,poly-cis-dolichyl beta-D-mannosyl phosphate = an alpha-D-Man-(1-&gt;2)-alpha-D-Man-(1-&gt;2)-alpha-D-Man-(1-&gt;3)-[alpha-D-Man-(1-&gt;2)-alpha-D-Man-(1-&gt;3)-[alpha-D-Man-(1-&gt;2)-alpha-D-Man-(1-&gt;6)]-alpha-D-Man-(1-&gt;6)]-beta-D-Man-(1-&gt;4)-beta-D-GlcNAc-(1-&gt;4)-alpha-D-GlcNAc-diphospho-di-trans,poly-cis-dolichol + a di-trans,poly-cis-dolichyl phosphate + H(+). Its pathway is protein modification; protein glycosylation. Its function is as follows. Catalyzes the transfer of mannose from Dol-P-Man to lipid-linked oligosaccharides. In Caenorhabditis elegans, this protein is Alpha-1,2-mannosyltransferase algn-9.